The primary structure comprises 441 residues: Amino-acid acetyltransferase (441 aa).

The N-acetyltransferase domain occupies 295–434 (EQVRRATIND…QELYNYQRRS (140 aa)).

Belongs to the acetyltransferase family. ArgA subfamily. In terms of assembly, homohexamer.

Its subcellular location is the cytoplasm. It catalyses the reaction L-glutamate + acetyl-CoA = N-acetyl-L-glutamate + CoA + H(+). Its pathway is amino-acid biosynthesis; L-arginine biosynthesis; N(2)-acetyl-L-ornithine from L-glutamate: step 1/4. The protein is Amino-acid acetyltransferase of Yersinia enterocolitica serotype O:8 / biotype 1B (strain NCTC 13174 / 8081).